Here is a 451-residue protein sequence, read N- to C-terminus: Sensor histidine kinase CssS (451 aa).

The Cytoplasmic segment spans residues 1-9; it reads MKNKPLAFQ. A helical membrane pass occupies residues 10–30; that stretch reads IWVVISGILLAISILLLVLFS. At 31–165 the chain is on the extracellular side; sequence NTLRDFFTNE…RDDLAYTLFK (135 aa). The chain crosses the membrane as a helical span at residues 166 to 186; it reads QLLFIIAVVILLSWIPAIWLA. One can recognise an HAMP domain in the interval 187-239; it reads KYLSRPLVSFEKHVKRISEQDWDDPVKVDRKDEIGKLGHTIEEMRQKLVQKDE. The Cytoplasmic portion of the chain corresponds to 187–451; it reads KYLSRPLVSF…GVTYRIAVPK (265 aa). The region spanning 247–451 is the Histidine kinase domain; that stretch reads NISHDLKTPV…GVTYRIAVPK (205 aa). Residue His250 is modified to Phosphohistidine; by autocatalysis.

It localises to the cell membrane. It carries out the reaction ATP + protein L-histidine = ADP + protein N-phospho-L-histidine.. Its function is as follows. Member of the two-component regulatory system CssS/CssR required to control the cellular response to secretion stress. Required for the transcription of htrA. Could detect misfolded proteins at the membrane-cell wall interface and then activate CssR by phosphorylation. This Bacillus subtilis (strain 168) protein is Sensor histidine kinase CssS (cssS).